The following is a 174-amino-acid chain: UPF0316 protein LMHCC_0787 (174 aa).

A run of 3 helical transmembrane segments spans residues 4-24 (GIFIVATIFVVNILYVTIYTV), 36-56 (LAALSSVFEMIIYVVALSLVL), and 62-82 (IANVLAYAIGFGVGIIVGMKI).

This sequence belongs to the UPF0316 family.

The protein localises to the cell membrane. The polypeptide is UPF0316 protein LMHCC_0787 (Listeria monocytogenes serotype 4a (strain HCC23)).